A 252-amino-acid chain; its full sequence is Probable transcriptional regulatory protein THA_1246 (252 aa).

Belongs to the TACO1 family.

The protein resides in the cytoplasm. The sequence is that of Probable transcriptional regulatory protein THA_1246 from Thermosipho africanus (strain TCF52B).